The primary structure comprises 2748 residues: Chalcone synthase cfoA (2748 aa).

Residues 13-511 are adenylation (A) domain; the sequence is RHAGESCEKV…DTVPRTVIGK (499 aa). One can recognise a Carrier 1 domain in the interval 535-620; sequence DLIEALVMAE…AVSTYLHGRL (86 aa). Residue Ser579 is modified to O-(pantetheine 4'-phosphoryl)serine. The Ketosynthase family 3 (KS3) domain maps to 641–1073; sequence VEPIAIVSMA…GTNSHIILEQ (433 aa). Active-site for beta-ketoacyl synthase activity residues include Cys813, His948, and His995. The Malonyl-CoA:ACP transacylase (MAT) domain occupies 1196-1489; it reads FSGQGSWMPT…ATHGTVDKLL (294 aa). A dehydratase (DH) domain region spans residues 1561–1842; that stretch reads LGHEMIFNAT…ENSFSMTMTD (282 aa). The tract at residues 1563–1707 is N-terminal hotdog fold; it reads HEMIFNATSI…GTFQLISQPN (145 aa). The region spanning 1563 to 1866 is the PKS/mFAS DH domain; sequence HEMIFNATSI…LRTWQPTVAG (304 aa). His1595 functions as the Proton acceptor; for dehydratase activity in the catalytic mechanism. The C-terminal hotdog fold stretch occupies residues 1722 to 1866; that stretch reads AESDVNISEA…LRTWQPTVAG (145 aa). The active-site Proton donor; for dehydratase activity is the Asp1784. A Ketoreductase (KR) domain is found at 2031-2210; that stretch reads GTVLITGGTG…ALSLAWGPWA (180 aa). One can recognise a Carrier 2 domain in the interval 2305 to 2383; the sequence is NRHDTLLGLV…ALVEYLLPRI (79 aa). Ser2342 carries the O-(pantetheine 4'-phosphoryl)serine modification. The interval 2386 to 2426 is disordered; the sequence is EPQPEVDTDSDASTTAGDTSVSRDSGKEDELSPSSSVTTLA. A compositionally biased stretch (low complexity) spans 2396–2407; it reads DASTTAGDTSVS. A thioester reductase (TE) domain region spans residues 2519–2742; sequence VGLSVYSNLA…GAAGEIERWA (224 aa).

In the N-terminal section; belongs to the NRP synthetase family. The cofactor is pantetheine 4'-phosphate.

Its pathway is secondary metabolite biosynthesis; flavonoid biosynthesis. Functionally, hybrid PKS-NRPS synthetase; part of the gene cluster that mediates the biosynthesis of chlorflavonin, a fungal flavonoid with acetolactate synthase inhibitory activity. Within the pathway, the PKS-NRPS cfoA, is responsible for the generation of the key precursor chalcone. The adenylation (A) domain activates benzoic acid or p-hydroxybenzoic acid which are transferred to the thiol group of the pantetheinyl residue of the T domain, and further transferred to the adjacent PKS portion of cfoA. Within the PKS portion of cfoA, benzoic acid or p-hydroxybenzoic acid act as starter units for respectively four malonyl-CoA molecules for elongation by the AT and KS domains. Afterwards, chalcone is cyclized through Claisen condensation and thereby released either spontaneously or catalyzed by the TE domain. Then, a new type of chalcone isomerase, cfoK, catalyzes the conversion of the chalcone into a flavanone by a histidine-mediated oxa-Michael addition mechanism. The desaturation of flavanone to flavone is catalyzed by a new type of flavone synthase, the flavin mononucleotide (FMN)-dependent oxidoreductase cfoJ. Monooxygenases cfoF, cfoG, and P450 cfoH are responsible for the hydroxylation of the flavonoid skeleton at sites C3, C8, and C2', respectively. Like cfoF, the dehydratase cfoI plays also a role in the hydroxylation of position C3. Methyltransferases cfoB, cfoC, and cfoD then catalyze the methylation of C7-OH, C8-OH, and C3-OH, respectively. Finally, the monooxygenase cfoE is responsible for the chlorination of flavonoid at position C3'. This is Chalcone synthase cfoA from Aspergillus candidus.